We begin with the raw amino-acid sequence, 101 residues long: Protein Tat (101 aa).

Positions 1–24 (MEPVDPSLDPWNHPGSQPTTPCTK) are interaction with human CREBBP. The segment at 1-48 (MEPVDPSLDPWNHPGSQPTTPCTKCYCKRCCFHCQWCFTTKGLGISYG) is transactivation. Residues cysteine 22, cysteine 25, and cysteine 27 each coordinate Zn(2+). The cysteine-rich stretch occupies residues 22-37 (CTKCYCKRCCFHCQWC). N6-acetyllysine; by host PCAF is present on lysine 28. Zn(2+) contacts are provided by cysteine 30, histidine 33, cysteine 34, and cysteine 37. Residues 38–48 (FTTKGLGISYG) are core. Over residues 48–58 (GRKKRRQRHRT) the composition is skewed to basic residues. Residues 48 to 101 (GRKKRRQRHRTPQSSQVHQNSLPKQPLSQARGDPTGPKESKKEVESKAKTDPCA) form a disordered region. The Nuclear localization signal, RNA-binding (TAR), and protein transduction signature appears at 49–57 (RKKRRQRHR). The interaction with the host capping enzyme RNGTT stretch occupies residues 49-86 (RKKRRQRHRTPQSSQVHQNSLPKQPLSQARGDPTGPKE). N6-acetyllysine; by host EP300 and GCN5L2 occurs at positions 50 and 51. Asymmetric dimethylarginine; by host PRMT6 occurs at positions 52 and 53. The segment covering 59–75 (PQSSQVHQNSLPKQPLS) has biased composition (polar residues). Residue lysine 71 forms a Glycyl lysine isopeptide (Lys-Gly) (interchain with G-Cter in ubiquitin) linkage. A Cell attachment site motif is present at residues 78-80 (RGD). Basic and acidic residues predominate over residues 83-101 (GPKESKKEVESKAKTDPCA).

This sequence belongs to the lentiviruses Tat family. As to quaternary structure, interacts with host CCNT1. Associates with the P-TEFb complex composed at least of Tat, P-TEFb (CDK9 and CCNT1), TAR RNA, RNA Pol II. Recruits the HATs CREBBP, TAF1/TFIID, EP300, PCAF and GCN5L2. Interacts with host KAT5/Tip60; this interaction targets the latter to degradation. Interacts with the host deacetylase SIRT1. Interacts with host capping enzyme RNGTT; this interaction stimulates RNGTT. Binds to host KDR, and to the host integrins ITGAV/ITGB3 and ITGA5/ITGB1. Interacts with host KPNB1/importin beta-1 without previous binding to KPNA1/importin alpha-1. Interacts with EIF2AK2. Interacts with host nucleosome assembly protein NAP1L1; this interaction may be required for the transport of Tat within the nucleus, since the two proteins interact at the nuclear rim. Interacts with host C1QBP/SF2P32; this interaction involves lysine-acetylated Tat. Interacts with the host chemokine receptors CCR2, CCR3 and CXCR4. Interacts with host DPP4/CD26; this interaction may trigger an anti-proliferative effect. Interacts with host LDLR. Interacts with the host extracellular matrix metalloproteinase MMP1. Interacts with host PRMT6; this interaction mediates Tat's methylation. Interacts with, and is ubiquitinated by MDM2/Hdm2. Interacts with host PSMC3 and HTATIP2. Interacts with STAB1; this interaction may overcome SATB1-mediated repression of IL2 and IL2RA (interleukin) in T cells by binding to the same domain than HDAC1. Interacts (when acetylated) with human CDK13, thereby increasing HIV-1 mRNA splicing and promoting the production of the doubly spliced HIV-1 protein Nef. Interacts with host TBP; this interaction modulates the activity of transcriptional pre-initiation complex. Interacts with host RELA. Interacts with host PLSCR1; this interaction negatively regulates Tat transactivation activity by altering its subcellular distribution. Post-translationally, asymmetrical arginine methylation by host PRMT6 seems to diminish the transactivation capacity of Tat and affects the interaction with host CCNT1. Acetylation by EP300, CREBBP, GCN5L2/GCN5 and PCAF regulates the transactivation activity of Tat. EP300-mediated acetylation of Lys-50 promotes dissociation of Tat from the TAR RNA through the competitive binding to PCAF's bromodomain. In addition, the non-acetylated Tat's N-terminus can also interact with PCAF. PCAF-mediated acetylation of Lys-28 enhances Tat's binding to CCNT1. Lys-50 is deacetylated by SIRT1. In terms of processing, polyubiquitination by host MDM2 does not target Tat to degradation, but activates its transactivation function and fosters interaction with CCNT1 and TAR RNA. Post-translationally, phosphorylated by EIF2AK2 on serine and threonine residues adjacent to the basic region important for TAR RNA binding and function. Phosphorylation of Tat by EIF2AK2 is dependent on the prior activation of EIF2AK2 by dsRNA.

The protein localises to the host nucleus. The protein resides in the host nucleolus. It is found in the host cytoplasm. Its subcellular location is the secreted. In terms of biological role, transcriptional activator that increases RNA Pol II processivity, thereby increasing the level of full-length viral transcripts. Recognizes a hairpin structure at the 5'-LTR of the nascent viral mRNAs referred to as the transactivation responsive RNA element (TAR) and recruits the cyclin T1-CDK9 complex (P-TEFb complex) that will in turn hyperphosphorylate the RNA polymerase II to allow efficient elongation. The CDK9 component of P-TEFb and other Tat-activated kinases hyperphosphorylate the C-terminus of RNA Pol II that becomes stabilized and much more processive. Other factors such as HTATSF1/Tat-SF1, SUPT5H/SPT5, and HTATIP2 are also important for Tat's function. Besides its effect on RNA Pol II processivity, Tat induces chromatin remodeling of proviral genes by recruiting the histone acetyltransferases (HATs) CREBBP, EP300 and PCAF to the chromatin. This also contributes to the increase in proviral transcription rate, especially when the provirus integrates in transcriptionally silent region of the host genome. To ensure maximal activation of the LTR, Tat mediates nuclear translocation of NF-kappa-B by interacting with host RELA. Through its interaction with host TBP, Tat may also modulate transcription initiation. Tat can reactivate a latently infected cell by penetrating in it and transactivating its LTR promoter. In the cytoplasm, Tat is thought to act as a translational activator of HIV-1 mRNAs. Extracellular circulating Tat can be endocytosed by surrounding uninfected cells via the binding to several surface receptors such as CD26, CXCR4, heparan sulfate proteoglycans (HSPG) or LDLR. Neurons are rarely infected, but they internalize Tat via their LDLR. Through its interaction with nuclear HATs, Tat is potentially able to control the acetylation-dependent cellular gene expression. Modulates the expression of many cellular genes involved in cell survival, proliferation or in coding for cytokines or cytokine receptors. Tat plays a role in T-cell and neurons apoptosis. Tat induced neurotoxicity and apoptosis probably contribute to neuroAIDS. Circulating Tat also acts as a chemokine-like and/or growth factor-like molecule that binds to specific receptors on the surface of the cells, affecting many cellular pathways. In the vascular system, Tat binds to ITGAV/ITGB3 and ITGA5/ITGB1 integrins dimers at the surface of endothelial cells and competes with bFGF for heparin-binding sites, leading to an excess of soluble bFGF. This chain is Protein Tat, found in Human immunodeficiency virus type 1 group M subtype F1 (isolate VI850) (HIV-1).